Consider the following 193-residue polypeptide: CRIB domain-containing protein RIC5 (193 aa).

The 14-residue stretch at 29–42 folds into the CRIB domain; the sequence is IGIPTDVKHVAHIG. The tract at residues 42–193 is disordered; sequence GWEGPSATTP…CAGLGSSTGR (152 aa). Positions 55-67 are enriched in basic and acidic residues; that stretch reads HDFKPTDQTKTET. The segment covering 90–100 has biased composition (polar residues); the sequence is STGNNSPTESP. Residues 123–134 are compositionally biased toward low complexity; that stretch reads GSGSESGSGLEL.

Interacts with ARAC11/ROP1. As to expression, expressed in flowers and pollen.

The protein localises to the cell membrane. In terms of biological role, functions as a downstream effector of Rho-related GTP binding proteins of the 'Rho of Plants' (ROPs) family. Participates in the propagation of ROP GTPase signals in specific cellular responses. Is involved in pollen tube growth regulation through its interaction with ARAC11/ROP1. This is CRIB domain-containing protein RIC5 (RIC5) from Arabidopsis thaliana (Mouse-ear cress).